Reading from the N-terminus, the 180-residue chain is 3-hydroxyanthranilate 3,4-dioxygenase (180 aa).

Position 44 (Arg44) interacts with O2. Residues His48, Glu54, and His92 each contribute to the Fe cation site. Position 54 (Glu54) interacts with substrate. Arg96 and Glu106 together coordinate substrate. A divalent metal cation is bound by residues Cys121, Cys124, Cys158, and Cys161.

Belongs to the 3-HAO family. Fe(2+) is required as a cofactor.

Its subcellular location is the cytoplasm. The enzyme catalyses 3-hydroxyanthranilate + O2 = (2Z,4Z)-2-amino-3-carboxymuconate 6-semialdehyde. It functions in the pathway cofactor biosynthesis; NAD(+) biosynthesis; quinolinate from L-kynurenine: step 3/3. Catalyzes the oxidative ring opening of 3-hydroxyanthranilate to 2-amino-3-carboxymuconate semialdehyde, which spontaneously cyclizes to quinolinate. The chain is 3-hydroxyanthranilate 3,4-dioxygenase (bna1) from Neurospora crassa (strain ATCC 24698 / 74-OR23-1A / CBS 708.71 / DSM 1257 / FGSC 987).